A 706-amino-acid chain; its full sequence is Ribosomal RNA large subunit methyltransferase K/L (706 aa).

One can recognise a THUMP domain in the interval 43–154; that stretch reads LMYQSLLWSR…RDMASVALDL (112 aa).

This sequence belongs to the methyltransferase superfamily. RlmKL family.

The protein localises to the cytoplasm. The catalysed reaction is guanosine(2445) in 23S rRNA + S-adenosyl-L-methionine = N(2)-methylguanosine(2445) in 23S rRNA + S-adenosyl-L-homocysteine + H(+). It catalyses the reaction guanosine(2069) in 23S rRNA + S-adenosyl-L-methionine = N(2)-methylguanosine(2069) in 23S rRNA + S-adenosyl-L-homocysteine + H(+). Its function is as follows. Specifically methylates the guanine in position 2445 (m2G2445) and the guanine in position 2069 (m7G2069) of 23S rRNA. The protein is Ribosomal RNA large subunit methyltransferase K/L of Yersinia pseudotuberculosis serotype O:1b (strain IP 31758).